We begin with the raw amino-acid sequence, 231 residues long: Ribosyldihydronicotinamide dehydrogenase [quinone] (231 aa).

FAD-binding positions include His-12, 18–21 (FNGS), and 104–107 (LYWF). Residue 127 to 129 (FDV) participates in substrate binding. Residues 148–151 (TTGG) and Tyr-156 each bind FAD. Zn(2+) is bound by residues His-174 and His-178. An FAD-binding site is contributed by Glu-194. Phosphoserine is present on Ser-197. Arg-201 contributes to the FAD binding site. Residue Cys-223 participates in Zn(2+) binding.

The protein belongs to the NAD(P)H dehydrogenase (quinone) family. Homodimer. Zn(2+) serves as cofactor. FAD is required as a cofactor.

Its subcellular location is the cytoplasm. It carries out the reaction 1-(beta-D-ribofuranosyl)-1,4-dihydronicotinamide + a quinone + H(+) = beta-nicotinamide D-riboside + a quinol. Functionally, the enzyme apparently serves as a quinone reductase in connection with conjugation reactions of hydroquinones involved in detoxification pathways as well as in biosynthetic processes such as the vitamin K-dependent gamma-carboxylation of glutamate residues in prothrombin synthesis. The chain is Ribosyldihydronicotinamide dehydrogenase [quinone] (Nqo2) from Rattus norvegicus (Rat).